Consider the following 340-residue polypeptide: ATP synthase subunit a (340 aa).

The N-terminal stretch at methionine 1–alanine 32 is a signal peptide. Transmembrane regions (helical) follow at residues histidine 107–serine 127, leucine 172–alanine 192, asparagine 197–leucine 217, alanine 236–leucine 256, isoleucine 269–valine 289, and isoleucine 296–leucine 316.

Belongs to the ATPase A chain family. As to quaternary structure, F-type ATPases have 2 components, CF(1) - the catalytic core - and CF(0) - the membrane proton channel. CF(1) has five subunits: alpha(3), beta(3), gamma(1), delta(1), epsilon(1). CF(0) has four main subunits: a, b, b' and c.

The protein resides in the cell inner membrane. Key component of the proton channel; it plays a direct role in the translocation of protons across the membrane. This is ATP synthase subunit a from Pelodictyon phaeoclathratiforme (strain DSM 5477 / BU-1).